A 383-amino-acid chain; its full sequence is Lipid-A-disaccharide synthase (383 aa).

This sequence belongs to the LpxB family.

The enzyme catalyses a lipid X + a UDP-2-N,3-O-bis[(3R)-3-hydroxyacyl]-alpha-D-glucosamine = a lipid A disaccharide + UDP + H(+). It functions in the pathway bacterial outer membrane biogenesis; LPS lipid A biosynthesis. Condensation of UDP-2,3-diacylglucosamine and 2,3-diacylglucosamine-1-phosphate to form lipid A disaccharide, a precursor of lipid A, a phosphorylated glycolipid that anchors the lipopolysaccharide to the outer membrane of the cell. This is Lipid-A-disaccharide synthase from Aliivibrio salmonicida (strain LFI1238) (Vibrio salmonicida (strain LFI1238)).